The following is a 207-amino-acid chain: Small ribosomal subunit protein uS3 (207 aa).

The region spanning 17-86 (IDEYLEKELR…NPQIEVEEIK (70 aa)) is the KH type-2 domain.

The protein belongs to the universal ribosomal protein uS3 family. In terms of assembly, part of the 30S ribosomal subunit.

Binds the lower part of the 30S subunit head. In Thermococcus sibiricus (strain DSM 12597 / MM 739), this protein is Small ribosomal subunit protein uS3.